We begin with the raw amino-acid sequence, 106 residues long: MKVDMSTSVKDDAQLEASRVRENPPPMYKVLLLNDDFTPMDFVVQVLQQFFHMNREKATHIMLQVHTQGHGVCGVYTKDVAATKVEQVLQYAKAHQHPLQCVMEEN.

The segment at 1–20 (MKVDMSTSVKDDAQLEASRV) is disordered.

This sequence belongs to the ClpS family. In terms of assembly, binds to the N-terminal domain of the chaperone ClpA.

Functionally, involved in the modulation of the specificity of the ClpAP-mediated ATP-dependent protein degradation. The chain is ATP-dependent Clp protease adapter protein ClpS from Chromobacterium violaceum (strain ATCC 12472 / DSM 30191 / JCM 1249 / CCUG 213 / NBRC 12614 / NCIMB 9131 / NCTC 9757 / MK).